The chain runs to 280 residues: Probable endonuclease lcl3 (280 aa).

Residues 50–67 (TLIPTLILTTAILSAARF) traverse the membrane as a helical segment. The region spanning 89–257 (RSIYGKVTSV…KLKGNGMWKG (169 aa)) is the TNase-like domain. The active site involves Arg-140. Asp-145 lines the Ca(2+) pocket. Catalysis depends on residues Glu-148 and Arg-188.

The protein belongs to the LCL3 family.

The protein resides in the mitochondrion. Its subcellular location is the membrane. This Emericella nidulans (strain FGSC A4 / ATCC 38163 / CBS 112.46 / NRRL 194 / M139) (Aspergillus nidulans) protein is Probable endonuclease lcl3 (lcl3).